Consider the following 201-residue polypeptide: Riboflavin synthase (201 aa).

2 Lumazine-binding repeats span residues 1–97 (MFTG…LGGH) and 98–197 (IVQG…ERLM). 2,4-dihydroxypteridine is bound by residues 4–6 (GIV), 47–49 (CLT), 62–67 (DVMAET), 101–103 (GHV), lysine 136, 145–147 (SLT), and 162–167 (SLIPTT).

In terms of assembly, homotrimer.

The catalysed reaction is 2 6,7-dimethyl-8-(1-D-ribityl)lumazine + H(+) = 5-amino-6-(D-ribitylamino)uracil + riboflavin. Its pathway is cofactor biosynthesis; riboflavin biosynthesis; riboflavin from 2-hydroxy-3-oxobutyl phosphate and 5-amino-6-(D-ribitylamino)uracil: step 2/2. Catalyzes the dismutation of two molecules of 6,7-dimethyl-8-ribityllumazine, resulting in the formation of riboflavin and 5-amino-6-(D-ribitylamino)uracil. This Mycobacterium bovis (strain ATCC BAA-935 / AF2122/97) protein is Riboflavin synthase (ribE).